The chain runs to 553 residues: Dihydroxy-acid dehydratase (553 aa).

Asp-78 provides a ligand contact to Mg(2+). A [2Fe-2S] cluster-binding site is contributed by Cys-119. Mg(2+) is bound by residues Asp-120 and Lys-121. Lys-121 is subject to N6-carboxylysine. Cys-191 is a binding site for [2Fe-2S] cluster. Glu-444 serves as a coordination point for Mg(2+). Ser-470 serves as the catalytic Proton acceptor.

It belongs to the IlvD/Edd family. In terms of assembly, homodimer. [2Fe-2S] cluster is required as a cofactor. Requires Mg(2+) as cofactor.

It carries out the reaction (2R)-2,3-dihydroxy-3-methylbutanoate = 3-methyl-2-oxobutanoate + H2O. The catalysed reaction is (2R,3R)-2,3-dihydroxy-3-methylpentanoate = (S)-3-methyl-2-oxopentanoate + H2O. The protein operates within amino-acid biosynthesis; L-isoleucine biosynthesis; L-isoleucine from 2-oxobutanoate: step 3/4. Its pathway is amino-acid biosynthesis; L-valine biosynthesis; L-valine from pyruvate: step 3/4. Its function is as follows. Functions in the biosynthesis of branched-chain amino acids. Catalyzes the dehydration of (2R,3R)-2,3-dihydroxy-3-methylpentanoate (2,3-dihydroxy-3-methylvalerate) into 2-oxo-3-methylpentanoate (2-oxo-3-methylvalerate) and of (2R)-2,3-dihydroxy-3-methylbutanoate (2,3-dihydroxyisovalerate) into 2-oxo-3-methylbutanoate (2-oxoisovalerate), the penultimate precursor to L-isoleucine and L-valine, respectively. The chain is Dihydroxy-acid dehydratase from Methanococcoides burtonii (strain DSM 6242 / NBRC 107633 / OCM 468 / ACE-M).